The following is a 270-amino-acid chain: Ribosomal RNA small subunit methyltransferase A (270 aa).

6 residues coordinate S-adenosyl-L-methionine: asparagine 16, leucine 18, glycine 43, glutamate 64, aspartate 89, and asparagine 110.

The protein belongs to the class I-like SAM-binding methyltransferase superfamily. rRNA adenine N(6)-methyltransferase family. RsmA subfamily.

The protein localises to the cytoplasm. It catalyses the reaction adenosine(1518)/adenosine(1519) in 16S rRNA + 4 S-adenosyl-L-methionine = N(6)-dimethyladenosine(1518)/N(6)-dimethyladenosine(1519) in 16S rRNA + 4 S-adenosyl-L-homocysteine + 4 H(+). Its function is as follows. Specifically dimethylates two adjacent adenosines (A1518 and A1519) in the loop of a conserved hairpin near the 3'-end of 16S rRNA in the 30S particle. May play a critical role in biogenesis of 30S subunits. This chain is Ribosomal RNA small subunit methyltransferase A, found in Pseudomonas fluorescens (strain ATCC BAA-477 / NRRL B-23932 / Pf-5).